We begin with the raw amino-acid sequence, 192 residues long: Imidazoleglycerol-phosphate dehydratase (192 aa).

Belongs to the imidazoleglycerol-phosphate dehydratase family.

The protein resides in the cytoplasm. It carries out the reaction D-erythro-1-(imidazol-4-yl)glycerol 3-phosphate = 3-(imidazol-4-yl)-2-oxopropyl phosphate + H2O. The protein operates within amino-acid biosynthesis; L-histidine biosynthesis; L-histidine from 5-phospho-alpha-D-ribose 1-diphosphate: step 6/9. This Caldivirga maquilingensis (strain ATCC 700844 / DSM 13496 / JCM 10307 / IC-167) protein is Imidazoleglycerol-phosphate dehydratase.